A 465-amino-acid polypeptide reads, in one-letter code: Sensor histidine kinase ZraS (465 aa).

Topologically, residues 1-14 (MSFIRLHKDAAATW) are cytoplasmic. The helical transmembrane segment at 15 to 35 (LSRLLPAAIFILVGLFSIMVI) threads the bilayer. Residues 36–202 (RDYGRESAAA…AATQAREWRN (167 aa)) lie on the Periplasmic side of the membrane. A helical transmembrane segment spans residues 203–223 (TLIVLSALAAVLLATLLAFFW). Residues 224–465 (HQRYQRSHRE…WLPVIARQQD (242 aa)) lie on the Cytoplasmic side of the membrane. One can recognise a Histidine kinase domain in the interval 253–461 (GVAHEIRNPL…VFTIWLPVIA (209 aa)). Histidine 256 carries the phosphohistidine; by autocatalysis modification.

In terms of processing, autophosphorylated.

It is found in the cell inner membrane. The enzyme catalyses ATP + protein L-histidine = ADP + protein N-phospho-L-histidine.. Activity of the ZraS/ZraR two-component system is repressed by the zinc-bound form of ZraP, which probably interacts with the periplasmic region of ZraS. In terms of biological role, part of the Zra signaling pathway, an envelope stress response (ESR) system composed of the periplasmic accessory protein ZraP, the histidine kinase ZraS and the transcriptional regulator ZraR. The ZraPSR system contributes to antibiotic resistance and is important for membrane integrity in the presence of membrane-targeting biocides. ZraS is a member of the two-component regulatory system ZraS/ZraR. Functions as a membrane-associated sensor kinase that phosphorylates ZraR in response to high concentrations of Zn(2+) or Pb(2+) in the medium. This Salmonella typhimurium (strain LT2 / SGSC1412 / ATCC 700720) protein is Sensor histidine kinase ZraS.